A 332-amino-acid polypeptide reads, in one-letter code: Nicotianamine synthase 1 (332 aa).

The protein belongs to the nicotianamine synthase (NAS)-like family. Expressed in roots.

The enzyme catalyses 3 S-adenosyl-L-methionine = nicotianamine + 3 S-methyl-5'-thioadenosine + 3 H(+). In terms of biological role, synthesizes nicotianamine, a polyamine that is the first intermediate in the synthesis of the phytosiderophores of the mugineic acid type found in gramineae which serve as a sensor for the physiological iron status within the plant, and/or might be involved in the transport of iron. The polypeptide is Nicotianamine synthase 1 (NAS1) (Oryza sativa subsp. indica (Rice)).